The chain runs to 124 residues: Fluoride-specific ion channel FluC (124 aa).

Transmembrane regions (helical) follow at residues 5 to 25 (VYIA…SGFV), 32 to 52 (SFPY…GLIM), 67 to 87 (FAIT…SFET), and 96 to 116 (LLIA…CTWI). The Na(+) site is built by G75 and T78.

The protein belongs to the fluoride channel Fluc/FEX (TC 1.A.43) family.

The protein resides in the cell inner membrane. It carries out the reaction fluoride(in) = fluoride(out). Na(+) is not transported, but it plays an essential structural role and its presence is essential for fluoride channel function. Fluoride-specific ion channel. Important for reducing fluoride concentration in the cell, thus reducing its toxicity. In Citrifermentans bemidjiense (strain ATCC BAA-1014 / DSM 16622 / JCM 12645 / Bem) (Geobacter bemidjiensis), this protein is Fluoride-specific ion channel FluC.